We begin with the raw amino-acid sequence, 427 residues long: Endothelin-1 receptor (427 aa).

Positions 1-20 (MSIFCLAAYFWLTMVGGVMA) are cleaved as a signal peptide. Topologically, residues 21–80 (DNPERYSANLSSHMEDFTPFPGTEINFLGTTHRPPNLALPSNGSMHGYCPQQTKITTAFK) are extracellular. Residues Asn29 and Asn62 are each glycosylated (N-linked (GlcNAc...) asparagine). Residues 81–102 (YINTVISCTIFIVGMVGNATLL) traverse the membrane as a helical segment. Over 103 to 112 (RIIYQNKCMR) the chain is Cytoplasmic. Residues 113-132 (NGPNALIASLALGDLIYVVI) form a helical membrane-spanning segment. Residues 133–159 (DLPINVFKLLAGRWPFDHNDFGVFLCK) are Extracellular-facing. Cys158 and Cys239 are joined by a disulfide. The helical transmembrane segment at 160–181 (LFPFLQKSSVGITVLNLCALSV) threads the bilayer. Residues 182–205 (DRYRAVASWSRVQGIGIPLITAIE) lie on the Cytoplasmic side of the membrane. A helical membrane pass occupies residues 206–229 (IVSIWILSFILAIPEAIGFVMVPF). Topologically, residues 230–256 (EYKGELHRTCMLNATSKFMEFYQDVKD) are extracellular. Asn242 is a glycosylation site (N-linked (GlcNAc...) asparagine). Residues 257 to 278 (WWLFGFYFCMPLVCTAIFYTLM) traverse the membrane as a helical segment. Topologically, residues 279–306 (TCEMLNRRNGSLRIALSEHLKQRREVAK) are cytoplasmic. Residues 307–328 (TVFCLVVIFALCWFPLHLSRIL) traverse the membrane as a helical segment. Over 329-347 (KKTVYDEMDKNRCELLSFL) the chain is Extracellular. A helical membrane pass occupies residues 348 to 372 (LLMDYIGINLATMNSCINPIALYFV). Topologically, residues 373–427 (SKKFKNCFQSCLCCCCHQSKSLMTSVPMNGTSIQWKNQEQNNHNTERSSHKDSMN) are cytoplasmic. Positions 408-427 (KNQEQNNHNTERSSHKDSMN) are disordered. The span at 416 to 427 (NTERSSHKDSMN) shows a compositional bias: basic and acidic residues. The residue at position 425 (Ser425) is a Phosphoserine.

This sequence belongs to the G-protein coupled receptor 1 family. Endothelin receptor subfamily. EDNRA sub-subfamily. Interacts with HDAC7 and KAT5.

It localises to the cell membrane. In terms of biological role, receptor for endothelin-1. Mediates its action by association with G proteins that activate a phosphatidylinositol-calcium second messenger system. The rank order of binding affinities for ET-A is: ET1 &gt; ET2 &gt;&gt; ET3. In Mus musculus (Mouse), this protein is Endothelin-1 receptor.